We begin with the raw amino-acid sequence, 151 residues long: 3-hydroxyacyl-[acyl-carrier-protein] dehydratase FabZ (151 aa).

The active site involves His49.

This sequence belongs to the thioester dehydratase family. FabZ subfamily.

It localises to the cytoplasm. The enzyme catalyses a (3R)-hydroxyacyl-[ACP] = a (2E)-enoyl-[ACP] + H2O. Its function is as follows. Involved in unsaturated fatty acids biosynthesis. Catalyzes the dehydration of short chain beta-hydroxyacyl-ACPs and long chain saturated and unsaturated beta-hydroxyacyl-ACPs. The protein is 3-hydroxyacyl-[acyl-carrier-protein] dehydratase FabZ of Wolinella succinogenes (strain ATCC 29543 / DSM 1740 / CCUG 13145 / JCM 31913 / LMG 7466 / NCTC 11488 / FDC 602W) (Vibrio succinogenes).